A 164-amino-acid polypeptide reads, in one-letter code: Cyclic pyranopterin monophosphate synthase (164 aa).

Substrate is bound by residues 77–79 (LCH) and 115–116 (ME). Residue Asp-130 is part of the active site.

It belongs to the MoaC family. As to quaternary structure, homohexamer; trimer of dimers.

It carries out the reaction (8S)-3',8-cyclo-7,8-dihydroguanosine 5'-triphosphate = cyclic pyranopterin phosphate + diphosphate. It functions in the pathway cofactor biosynthesis; molybdopterin biosynthesis. Functionally, catalyzes the conversion of (8S)-3',8-cyclo-7,8-dihydroguanosine 5'-triphosphate to cyclic pyranopterin monophosphate (cPMP). The chain is Cyclic pyranopterin monophosphate synthase from Sinorhizobium medicae (strain WSM419) (Ensifer medicae).